We begin with the raw amino-acid sequence, 351 residues long: Histidinol-phosphate aminotransferase (351 aa).

Residue Lys-221 is modified to N6-(pyridoxal phosphate)lysine.

This sequence belongs to the class-II pyridoxal-phosphate-dependent aminotransferase family. Histidinol-phosphate aminotransferase subfamily. In terms of assembly, homodimer. It depends on pyridoxal 5'-phosphate as a cofactor.

It carries out the reaction L-histidinol phosphate + 2-oxoglutarate = 3-(imidazol-4-yl)-2-oxopropyl phosphate + L-glutamate. It functions in the pathway amino-acid biosynthesis; L-histidine biosynthesis; L-histidine from 5-phospho-alpha-D-ribose 1-diphosphate: step 7/9. This chain is Histidinol-phosphate aminotransferase, found in Staphylococcus saprophyticus subsp. saprophyticus (strain ATCC 15305 / DSM 20229 / NCIMB 8711 / NCTC 7292 / S-41).